Here is a 424-residue protein sequence, read N- to C-terminus: MKFDVIIIGGGLAGLVCGIRLAEQGKYCAIVSAGQNALHFSSGSLDLLAKLPNGQAVSQPLSALETLAELAPEHPYSKMGQTGQVGELAQQAESLLSRCGLSLVGSAAKNHLRLTPLGNCRPTWLSPADIPVAPLEGPLPWQKVAVIGIEGFLDFQPQMVASALQEQGVEVTSDYLHLPALDRLRDNPSEFRAVNIARVLDLPENLQPLADELARLSSTAEMILLPACIGLDESAPLEALRAAVGKPIQLLPTLPPSLLGMRLHQALRHRFQQLGGIVMPGDAVLRAELVGNRITGLYSRNHGDIPLRAAQMVLASGSFFSNGLVATFEHVYEPILDLDILSLPNRADWSNSNMFAPQPYLQFGVNTDNRLRALRGGVALDNLHVIGAVLGGYDPLQQGCGAGVSLTSALFVAEQIVSAMEVTL.

The protein belongs to the anaerobic G-3-P dehydrogenase subunit B family. In terms of assembly, composed of a catalytic GlpA/B dimer and of membrane bound GlpC. It depends on FMN as a cofactor.

It carries out the reaction a quinone + sn-glycerol 3-phosphate = dihydroxyacetone phosphate + a quinol. Its pathway is polyol metabolism; glycerol degradation via glycerol kinase pathway; glycerone phosphate from sn-glycerol 3-phosphate (anaerobic route): step 1/1. Functionally, conversion of glycerol 3-phosphate to dihydroxyacetone. Uses fumarate or nitrate as electron acceptor. In Yersinia enterocolitica serotype O:8 / biotype 1B (strain NCTC 13174 / 8081), this protein is Anaerobic glycerol-3-phosphate dehydrogenase subunit B.